The chain runs to 417 residues: MQALVLLLWTGALLGHGSSQNVPSSSEGSPVPDSTGEPVEEEDPFFKVPVNKLAAAVSNFGYDLYRLRSSASPTGNVLLSPLSVATALSALSLGAEHRTESVIHRALYYDLITNPDIHSTYKELLASVTAPEKNLKSASRIVFERKLRVKSSFVAPLEKSYGTRPRILTGNPRVDLQEINNWVQAQMKGKIARSTREMPSALSILLLGVAYFKGQWVTKFDSRKTTLQDFHLDEDRTVRVPMMSDPKAILRYGLDSDLNCKIAQLPLTGSMSIIFFLPLTVTQNLTMIEESLTSEFIHDIDRELKTIQAVLTVPKLKLSFEGELTKSLQDMKLQSLFESPDFSKITGKPVKLTQVEHRAAFEWNEEGAGSSPSPGLQPVRLTFPLDYHLNQPFLFVLRDTDTGALLFIGRILDPSST.

The first 19 residues, 1–19 (MQALVLLLWTGALLGHGSS), serve as a signal peptide directing secretion. The interval 17-41 (GSSQNVPSSSEGSPVPDSTGEPVEE) is disordered. The span at 18–28 (SSQNVPSSSEG) shows a compositional bias: polar residues. Gln-20 carries the post-translational modification Pyrrolidone carboxylic acid. Ser-24 carries the post-translational modification Phosphoserine. N-linked (GlcNAc...) asparagine glycosylation occurs at Asn-284.

This sequence belongs to the serpin family. Interacts with PNPLA2; this interaction stimulates the phospholipase A2 activity of PNPLA2. Highly expressed in the liver, gastric glandular mucosa and renal tubules. It is also expressed in the brain, heart, lung retina and testes.

The protein resides in the secreted. It is found in the melanosome. Functionally, neurotrophic protein; induces extensive neuronal differentiation in retinoblastoma cells. Potent inhibitor of angiogenesis. As it does not undergo the S (stressed) to R (relaxed) conformational transition characteristic of active serpins, it exhibits no serine protease inhibitory activity. The polypeptide is Pigment epithelium-derived factor (Serpinf1) (Mus musculus (Mouse)).